The following is a 579-amino-acid chain: Putative diflavin flavoprotein A 2 (579 aa).

Residues 50–243 (QNGTTYNSYL…GKIKIIANGH (194 aa)) are zinc metallo-hydrolase. Fe cation is bound by residues His-99, Glu-101, Asp-103, His-166, Asp-185, and His-243. A Flavodoxin-like domain is found at 272-460 (VGLFYVADYG…MLASWVSQAS (189 aa)). Residues 461–579 (LQPLGFTIAV…VRHRKVGNYY (119 aa)) form a flavodoxin-reductase-like region.

The protein in the N-terminal section; belongs to the zinc metallo-hydrolase group 3 family. This sequence in the C-terminal section; belongs to the flavodoxin reductase family. Fe cation serves as cofactor.

Its function is as follows. Mediates electron transfer from NADH to oxygen, reducing it to water. This modular protein has 3 redox cofactors, in other organisms the same activity requires 2 or 3 proteins. This is Putative diflavin flavoprotein A 2 (dfa2) from Nostoc sp. (strain PCC 7120 / SAG 25.82 / UTEX 2576).